A 751-amino-acid polypeptide reads, in one-letter code: Catalase-peroxidase 1 (751 aa).

Over residues 1-11 (MTDKQHTRSVS) the composition is skewed to basic and acidic residues. The disordered stretch occupies residues 1–31 (MTDKQHTRSVSESENPAIPSPTPKVSRPRRN). Residues 103 to 225 (WHAAGTYRIA…LANVQMGLIY (123 aa)) constitute a cross-link (tryptophyl-tyrosyl-methioninium (Trp-Tyr) (with M-251)). Histidine 104 functions as the Proton acceptor in the catalytic mechanism. Residues 225-251 (YVNPEGPGGNPDPLAAARDIRETFARM) constitute a cross-link (tryptophyl-tyrosyl-methioninium (Tyr-Met) (with W-103)). Histidine 266 contacts heme b. Positions 345–375 (AGAKQWKPKNPEANDTVPDAHGASRRHSPTM) are disordered.

It belongs to the peroxidase family. Peroxidase/catalase subfamily. In terms of assembly, homodimer or homotetramer. It depends on heme b as a cofactor. In terms of processing, formation of the three residue Trp-Tyr-Met cross-link is important for the catalase, but not the peroxidase activity of the enzyme.

The catalysed reaction is H2O2 + AH2 = A + 2 H2O. It catalyses the reaction 2 H2O2 = O2 + 2 H2O. In terms of biological role, bifunctional enzyme with both catalase and broad-spectrum peroxidase activity. The protein is Catalase-peroxidase 1 of Cupriavidus pinatubonensis (strain JMP 134 / LMG 1197) (Cupriavidus necator (strain JMP 134)).